The primary structure comprises 117 residues: Hydrogenase maturation factor HypA (117 aa).

Residue His2 coordinates Ni(2+). Positions 73, 76, 92, and 95 each coordinate Zn(2+).

The protein belongs to the HypA/HybF family.

In terms of biological role, involved in the maturation of [NiFe] hydrogenases. Required for nickel insertion into the metal center of the hydrogenase. The chain is Hydrogenase maturation factor HypA from Solidesulfovibrio magneticus (strain ATCC 700980 / DSM 13731 / RS-1) (Desulfovibrio magneticus).